The chain runs to 689 residues: uncharacterized protein (689 aa).

4 disordered regions span residues 121–206, 286–305, 322–414, and 552–611; these read LALK…VDPS, ASSN…PMDN, NSYS…SMAH, and AAMP…HLSD. Positions 133–158 are enriched in low complexity; the sequence is SPNNSIPLMANSCLLSADNSSSSTTS. The span at 322–380 shows a compositional bias: polar residues; that stretch reads NSYSYDRYTPNQPSYLESKPGNHQPSYTSEQPMYSTASVPQQISNGPTAVNGLPMNSYT. Low complexity-rich tracts occupy residues 381–411 and 560–572; these read PHSN…SSPS and PSAH…PSPH.

It is found in the cytoplasm. This is an uncharacterized protein from Schizosaccharomyces pombe (strain 972 / ATCC 24843) (Fission yeast).